The following is a 504-amino-acid chain: Probable cytosol aminopeptidase (504 aa).

Positions 268 and 273 each coordinate Mn(2+). The active site involves Lys280. Residues Asp291, Asp350, and Glu352 each coordinate Mn(2+). Residue Arg354 is part of the active site.

It belongs to the peptidase M17 family. It depends on Mn(2+) as a cofactor.

It is found in the cytoplasm. It carries out the reaction Release of an N-terminal amino acid, Xaa-|-Yaa-, in which Xaa is preferably Leu, but may be other amino acids including Pro although not Arg or Lys, and Yaa may be Pro. Amino acid amides and methyl esters are also readily hydrolyzed, but rates on arylamides are exceedingly low.. The enzyme catalyses Release of an N-terminal amino acid, preferentially leucine, but not glutamic or aspartic acids.. Its function is as follows. Presumably involved in the processing and regular turnover of intracellular proteins. Catalyzes the removal of unsubstituted N-terminal amino acids from various peptides. The protein is Probable cytosol aminopeptidase of Psychromonas ingrahamii (strain DSM 17664 / CCUG 51855 / 37).